Here is a 705-residue protein sequence, read N- to C-terminus: Gamma-adducin (705 aa).

The segment covering 1-10 (MSSDTSQAVI) has biased composition (polar residues). The disordered stretch occupies residues 1-22 (MSSDTSQAVITTPPPPSMPHKE). S2 is subject to N-acetylserine. Phosphoserine occurs at positions 31, 42, 64, 402, 414, 423, 442, and 461. Disordered stretches follow at residues 472–495 (EDPS…VPLN), 535–556 (PSTM…PFSH), 572–612 (KQQG…EENH), and 658–705 (EITI…KVEA). K484 is covalently cross-linked (Glycyl lysine isopeptide (Lys-Gly) (interchain with G-Cter in SUMO2)). Residues S583, S585, S590, S672, S676, S678, and S680 each carry the phosphoserine modification. A compositionally biased stretch (low complexity) spans 590-605 (SVSQIQSQTQSPQSVP). The segment covering 681 to 705 (PSKKKKKFRTPSFLKKNKKKEKVEA) has biased composition (basic residues). A Phosphoserine; by PKC modification is found at S682. An interaction with calmodulin region spans residues 683–700 (KKKKKFRTPSFLKKNKKK).

This sequence belongs to the aldolase class II family. Adducin subfamily. Heterodimer of an alpha and a gamma subunit. In terms of processing, sumoylated. Post-translationally, proteolytically cleaved by asparagine endopeptidase (AEP) into 2 fragments. Overexpression of the 1-357 fragment induces neuronal apoptosis, and overexpression of either 1-357 or 358-706 fragment increases the degeneration of dendritic spines. Overexpression of the 1-357 fragment impairs neurite outgrowth by downregulating the expression of Rac2, and induces synaptic dysfunction and cognitive impairments in tau P301S transgenic mice, a mouse model for Alzheimer disease (AD). Expressed in kidney, brain, spleen, liver and heart. As to expression, expressed in renal interlobular arteries, afferent/efferent arterioles, parietal glomerular epithelial cells and microvilli of the luminal surface of the proximal tubule (at protein level). Expressed in podocytes (at protein level) Expressed in renal cortex (at protein level). Expressed in primary vascular smooth muscle cells (VSMCs) of the kidney (at protein level). Expressed in tubular cells and glomeruli (at protein level).

It is found in the cytoplasm. Its subcellular location is the cytoskeleton. The protein localises to the cell membrane. Its function is as follows. Membrane-cytoskeleton-associated protein that promotes the assembly of the spectrin-actin network. Plays a role in actin filament capping. Binds to calmodulin. Involved in myogenic reactivity of the renal afferent arteriole (Af-art), renal interlobular arteries and middle cerebral artery (MCA) to increased perfusion pressure. Involved in regulation of potassium channels in the vascular smooth muscle cells (VSMCs) of the Af-art and MCA ex vivo. Involved in regulation of glomerular capillary pressure, glomerular filtration rate (GFR) and glomerular nephrin expression in response to hypertension. Involved in renal blood flow (RBF) autoregulation. Plays a role in podocyte structure and function. Regulates globular monomer actin (G-actin) and filamentous polymer actin (F-actin) ratios in the primary podocytes affecting actin cytoskeleton organization. Regulates expression of synaptopodin, RhoA, Rac1 and CDC42 in the renal cortex and the primary podocytes. Regulates expression of nephrin in the glomeruli and in the primary podocytes, expression of nephrin and podocinin in the renal cortex, and expression of focal adhesion proteins integrin alpha-3 and integrin beta-1 in the glomeruli. Involved in cell migration and cell adhesion of podocytes, and in podocyte foot process effacement. Regulates expression of profibrotics markers MMP2, MMP9, TGF beta-1, tubular tight junction protein E-cadherin, and mesenchymal markers vimentin and alpha-SMA. Promotes the growth of neurites. The protein is Gamma-adducin (Add3) of Rattus norvegicus (Rat).